We begin with the raw amino-acid sequence, 139 residues long: uncharacterized protein (139 aa).

The segment at 54–75 (NSLHRHGDQAWGKHRRQNSLKS) is disordered.

This is an uncharacterized protein from Homo sapiens (Human).